We begin with the raw amino-acid sequence, 320 residues long: Cytochrome c1-1, heme protein, mitochondrial (320 aa).

Residues M1 to S77 constitute a mitochondrion transit peptide. The Mitochondrial intermembrane segment spans residues D78 to R280. Residues A103–L210 enclose the Cytochrome c domain. Heme c-binding residues include C116, C119, H120, and M239. A helical membrane pass occupies residues K281–Y301. The Mitochondrial matrix segment spans residues R302–N320.

This sequence belongs to the cytochrome c family. As to quaternary structure, component of the ubiquinol-cytochrome c oxidoreductase (cytochrome b-c1 complex, complex III, CIII), a multisubunit enzyme composed of 3 respiratory subunits cytochrome b, cytochrome c1 and Rieske protein, 2 core protein subunits, and additional low-molecular weight protein subunits. The complex exists as an obligatory dimer and forms supercomplexes (SCs) in the inner mitochondrial membrane with cytochrome c oxidase (complex IV, CIV). Heme c is required as a cofactor. In terms of tissue distribution, in all tissues analyzed.

The protein localises to the mitochondrion inner membrane. It carries out the reaction a quinol + 2 Fe(III)-[cytochrome c](out) = a quinone + 2 Fe(II)-[cytochrome c](out) + 2 H(+)(out). In terms of biological role, component of the ubiquinol-cytochrome c oxidoreductase, a multisubunit transmembrane complex that is part of the mitochondrial electron transport chain which drives oxidative phosphorylation. The respiratory chain contains 3 multisubunit complexes succinate dehydrogenase (complex II, CII), ubiquinol-cytochrome c oxidoreductase (cytochrome b-c1 complex, complex III, CIII) and cytochrome c oxidase (complex IV, CIV), that cooperate to transfer electrons derived from NADH and succinate to molecular oxygen, creating an electrochemical gradient over the inner membrane that drives transmembrane transport and the ATP synthase. The cytochrome b-c1 complex catalyzes electron transfer from ubiquinol to cytochrome c, linking this redox reaction to translocation of protons across the mitochondrial inner membrane, with protons being carried across the membrane as hydrogens on the quinol. In the process called Q cycle, 2 protons are consumed from the matrix, 4 protons are released into the intermembrane space and 2 electrons are passed to cytochrome c. Cytochrome c1 is a catalytic core subunit containing a c-type heme. It transfers electrons from the [2Fe-2S] iron-sulfur cluster of the Rieske protein to cytochrome c. The sequence is that of Cytochrome c1-1, heme protein, mitochondrial (CYCL) from Solanum tuberosum (Potato).